We begin with the raw amino-acid sequence, 148 residues long: Large ribosomal subunit protein bL9 (148 aa).

It belongs to the bacterial ribosomal protein bL9 family.

In terms of biological role, binds to the 23S rRNA. The sequence is that of Large ribosomal subunit protein bL9 from Leptospira biflexa serovar Patoc (strain Patoc 1 / Ames).